The primary structure comprises 256 residues: Cysteine-rich repeat secretory protein 29 (256 aa).

An N-terminal signal peptide occupies residues 1 to 26; that stretch reads MSSVFGSVHILAMIAIQLLLIHSVSS. Gnk2-homologous domains follow at residues 33 to 136 and 142 to 253; these read YLHH…SVAS and YEND…LYPF.

It belongs to the cysteine-rich repeat secretory protein family.

The protein resides in the secreted. The chain is Cysteine-rich repeat secretory protein 29 (CRRSP29) from Arabidopsis thaliana (Mouse-ear cress).